An 83-amino-acid chain; its full sequence is FMRFamide-like neuropeptide 23 (83 aa).

Residues 1–24 (MLLPKISILLYILVVLQETAAVRG) form the signal peptide. Positions 25-36 (ALFRSGRAVPFE) are excised as a propeptide. Phe-47 carries the post-translational modification Phenylalanine amide. Residues 50–83 (AGMASGVGGGSEGGPDDVKNSYIRVNGEPEIVYQ) constitute a propeptide that is removed on maturation.

Belongs to the FARP (FMRFamide related peptide) family. Each flp gene is expressed in a distinct set of neurons.

The protein localises to the secreted. Functionally, FMRFamides and FMRFamide-like peptides are neuropeptides. In Caenorhabditis elegans, this protein is FMRFamide-like neuropeptide 23 (flp-23).